A 356-amino-acid polypeptide reads, in one-letter code: Peptide chain release factor 1 (356 aa).

N5-methylglutamine is present on glutamine 234.

The protein belongs to the prokaryotic/mitochondrial release factor family. Post-translationally, methylated by PrmC. Methylation increases the termination efficiency of RF1.

The protein resides in the cytoplasm. Peptide chain release factor 1 directs the termination of translation in response to the peptide chain termination codons UAG and UAA. This is Peptide chain release factor 1 from Exiguobacterium sp. (strain ATCC BAA-1283 / AT1b).